The primary structure comprises 116 residues: Large ribosomal subunit protein bL17 (116 aa).

The protein belongs to the bacterial ribosomal protein bL17 family. Part of the 50S ribosomal subunit. Contacts protein L32.

The polypeptide is Large ribosomal subunit protein bL17 (Cyanothece sp. (strain PCC 7425 / ATCC 29141)).